We begin with the raw amino-acid sequence, 533 residues long: Acyl-CoA-binding domain-containing protein 5 (533 aa).

The 90-residue stretch at 42 to 131 (HETRFEAAVK…MKKILETMPM (90 aa)) folds into the ACB domain. An acyl-CoA-binding positions include 53–62 (IQSLPKNGSF), 73–77 (YSFYK), Lys99, and Tyr118. The interval 182-227 (TPNAKTVNGKAESSDSGAESEEEAAQEDPKRPEPRDSDKKMMKKSA) is disordered. Residues Ser194, Ser195, Ser197, and Ser201 each carry the phosphoserine modification. A compositionally biased stretch (basic and acidic residues) spans 208-227 (EDPKRPEPRDSDKKMMKKSA). Residues Ser244 and Ser314 each carry the phosphoserine modification. The interval 339-443 (GGNPSQPLES…ERWGSDRGSR (105 aa)) is disordered. The segment covering 374–383 (GKGEVKRGGE) has biased composition (basic and acidic residues). Ser429 carries the phosphoserine modification. The span at 432-442 (DGERWGSDRGS) shows a compositional bias: basic and acidic residues. Residues 448 to 478 (EQIALVLMRLQEDMQNVLQRLHKLEMLAASQ) adopt a coiled-coil conformation. Position 470 is an N6-acetyllysine (Lys470). Residues 503–525 (SPGALTFAIIWPFIAQWLVHLYY) form a helical membrane-spanning segment.

This sequence belongs to the ATG37 family. In terms of tissue distribution, highly expressed in brain and liver. Lower levels of expression in spleen and heart.

It is found in the peroxisome membrane. Its function is as follows. Acyl-CoA binding protein which acts as the peroxisome receptor for pexophagy but is dispensable for aggrephagy and nonselective autophagy. Binds medium- and long-chain acyl-CoA esters. The chain is Acyl-CoA-binding domain-containing protein 5 (ACBD5) from Bos taurus (Bovine).